The following is a 348-amino-acid chain: Ferredoxin--NADP reductase (348 aa).

FAD is bound by residues Thr25, Glu44, Gln52, Tyr57, Val97, Phe132, Asp298, and Ser339.

It belongs to the ferredoxin--NADP reductase type 2 family. Homodimer. FAD serves as cofactor.

It carries out the reaction 2 reduced [2Fe-2S]-[ferredoxin] + NADP(+) + H(+) = 2 oxidized [2Fe-2S]-[ferredoxin] + NADPH. The chain is Ferredoxin--NADP reductase from Chlorobium phaeobacteroides (strain BS1).